The primary structure comprises 116 residues: Protein Rev (116 aa).

2 positions are modified to phosphoserine; by host CK2: Ser5 and Ser8. The homomultimerization stretch occupies residues 18–26; the sequence is LIKILYQSN. Positions 26–50 are disordered; the sequence is NPYPKPNGSRQARRNRRRRWRARQN. The short motif at 34 to 50 is the Nuclear localization signal and RNA-binding (RRE) element; it reads SRQARRNRRRRWRARQN. The segment covering 36–47 has biased composition (basic residues); it reads QARRNRRRRWRA. Positions 73–84 match the Nuclear export signal and binding to XPO1 motif; the sequence is LQLPPIERLRLD. The interval 91–116 is disordered; sequence NSGTQGVGDPQISGEPCMVLGAGTKE. Ser92 is modified (phosphoserine; by host).

It belongs to the HIV-1 REV protein family. As to quaternary structure, homomultimer; when bound to the RRE. Multimeric assembly is essential for activity and may involve XPO1. Binds to human KPNB1, XPO1, TNPO1, RANBP5 and IPO7. Interacts with the viral Integrase. Interacts with human KHDRBS1. Interacts with human NAP1; this interaction decreases Rev multimerization and stimulates its activity. Interacts with human DEAD-box helicases DDX3 and DDX24; these interactions may serve for viral RNA export to the cytoplasm and packaging, respectively. Interacts with human PSIP1; this interaction may inhibit HIV-1 DNA integration by promoting dissociation of the Integrase-LEDGF/p75 complex. In terms of processing, asymmetrically arginine dimethylated at one site by host PRMT6. Methylation impairs the RNA-binding activity and export of viral RNA from the nucleus to the cytoplasm. Post-translationally, phosphorylated by protein kinase CK2. Presence of, and maybe binding to the N-terminus of the regulatory beta subunit of CK2 is necessary for CK2-mediated Rev's phosphorylation.

The protein resides in the host nucleus. The protein localises to the host nucleolus. It localises to the host cytoplasm. In terms of biological role, escorts unspliced or incompletely spliced viral pre-mRNAs (late transcripts) out of the nucleus of infected cells. These pre-mRNAs carry a recognition sequence called Rev responsive element (RRE) located in the env gene, that is not present in fully spliced viral mRNAs (early transcripts). This function is essential since most viral proteins are translated from unspliced or partially spliced pre-mRNAs which cannot exit the nucleus by the pathway used by fully processed cellular mRNAs. Rev itself is translated from a fully spliced mRNA that readily exits the nucleus. Rev's nuclear localization signal (NLS) binds directly to KPNB1/Importin beta-1 without previous binding to KPNA1/Importin alpha-1. KPNB1 binds to the GDP bound form of RAN (Ran-GDP) and targets Rev to the nucleus. In the nucleus, the conversion from Ran-GDP to Ran-GTP dissociates Rev from KPNB1 and allows Rev's binding to the RRE in viral pre-mRNAs. Rev multimerization on the RRE via cooperative assembly exposes its nuclear export signal (NES) to the surface. Rev can then form a complex with XPO1/CRM1 and Ran-GTP, leading to nuclear export of the complex. Conversion from Ran-GTP to Ran-GDP mediates dissociation of the Rev/RRE/XPO1/RAN complex, so that Rev can return to the nucleus for a subsequent round of export. Beside KPNB1, also seems to interact with TNPO1/Transportin-1, RANBP5/IPO5 and IPO7/RANBP7 for nuclear import. The nucleoporin-like HRB/RIP is an essential cofactor that probably indirectly interacts with Rev to release HIV RNAs from the perinuclear region to the cytoplasm. The chain is Protein Rev from Homo sapiens (Human).